The sequence spans 223 residues: Alpha-enolase (223 aa).

Ser8 is a binding site for Mg(2+). Tyr12 carries the phosphotyrosine modification. Lys25 carries the post-translational modification N6-acetyllysine. Residue Glu39 participates in substrate binding. At Lys61 the chain carries N6-acetyllysine. Glu69 acts as the Proton donor in catalysis. The residue at position 87 (Lys87) is an N6-acetyllysine; alternate. Lys87 is modified (N6-malonyllysine; alternate). Lys87 is subject to N6-succinyllysine; alternate. Asp99 and Asp119 together coordinate Mg(2+). Asp119 contacts substrate. 2 positions are modified to N6-acetyllysine: Lys133 and Lys141. Lys141 acts as the Proton acceptor in catalysis. Residues 168–171 (SHRS) and Lys192 contribute to the substrate site. Residues 202–223 (YNQILRIEEELGSKSFRNPLAK) form a required for interaction with PLG region. An N6-acetyllysine; alternate modification is found at Lys215. Lys215 is modified (N6-malonyllysine; alternate). The residue at position 215 (Lys215) is an N6-succinyllysine; alternate.

This sequence belongs to the enolase family. As to quaternary structure, mammalian enolase is composed of 3 isozyme subunits, alpha, beta and gamma, which can form homodimers or heterodimers which are cell-type and development-specific. ENO1 interacts with PLG in the neuronal plasma membrane and promotes its activation. The C-terminal lysine is required for this binding. Interacts with ENO4 and PGAM2. Interacts with CMTM6. Mg(2+) serves as cofactor. Post-translationally, ISGylated. In terms of processing, lysine 2-hydroxyisobutyrylation (Khib) by p300/EP300 activates the phosphopyruvate hydratase activity.

Its subcellular location is the cytoplasm. It localises to the cell membrane. The catalysed reaction is (2R)-2-phosphoglycerate = phosphoenolpyruvate + H2O. It functions in the pathway carbohydrate degradation; glycolysis; pyruvate from D-glyceraldehyde 3-phosphate: step 4/5. In terms of biological role, glycolytic enzyme the catalyzes the conversion of 2-phosphoglycerate to phosphoenolpyruvate. In addition to glycolysis, involved in various processes such as growth control, hypoxia tolerance and allergic responses. May also function in the intravascular and pericellular fibrinolytic system due to its ability to serve as a receptor and activator of plasminogen on the cell surface of several cell-types such as leukocytes and neurons. Stimulates immunoglobulin production. The chain is Alpha-enolase from Mesocricetus auratus (Golden hamster).